Consider the following 359-residue polypeptide: Ferredoxin--NADP reductase (359 aa).

Residues aspartate 48, glutamine 56, tyrosine 61, alanine 101, phenylalanine 139, aspartate 304, and serine 345 each coordinate FAD.

Belongs to the ferredoxin--NADP reductase type 2 family. In terms of assembly, homodimer. FAD serves as cofactor.

The enzyme catalyses 2 reduced [2Fe-2S]-[ferredoxin] + NADP(+) + H(+) = 2 oxidized [2Fe-2S]-[ferredoxin] + NADPH. The chain is Ferredoxin--NADP reductase from Ralstonia pickettii (strain 12J).